The sequence spans 340 residues: Fructose-1,6-bisphosphatase class 1 (340 aa).

Mg(2+)-binding residues include Glu-107, Asp-126, Leu-128, and Asp-129. Asn-215 lines the substrate pocket. Glu-287 is a binding site for Mg(2+).

The protein belongs to the FBPase class 1 family. In terms of assembly, homotetramer. The cofactor is Mg(2+).

The protein resides in the cytoplasm. It carries out the reaction beta-D-fructose 1,6-bisphosphate + H2O = beta-D-fructose 6-phosphate + phosphate. It functions in the pathway carbohydrate biosynthesis; gluconeogenesis. The polypeptide is Fructose-1,6-bisphosphatase class 1 (Brucella suis biovar 1 (strain 1330)).